Reading from the N-terminus, the 747-residue chain is DNA ligase 1 (747 aa).

The disordered stretch occupies residues 1–84 (MQKSITSFFK…KEVDDKTTDK (84 aa)). Phosphoserine occurs at positions 18, 20, 42, 44, 46, 60, and 65. Positions 26 to 42 (PKIDAKTELPDEPHIKS) are enriched in basic and acidic residues. The segment covering 60–84 (SEEKTSPVKNVKKEPKEVDDKTTDK) has biased composition (basic and acidic residues). The N6-AMP-lysine intermediate role is filled by Lys395. The span at 725 to 740 (QSQDQVKNNQKSSTQM) shows a compositional bias: polar residues. The segment at 725–747 (QSQDQVKNNQKSSTQMEMEDEFY) is disordered.

Belongs to the ATP-dependent DNA ligase family.

It localises to the nucleus. It carries out the reaction ATP + (deoxyribonucleotide)n-3'-hydroxyl + 5'-phospho-(deoxyribonucleotide)m = (deoxyribonucleotide)n+m + AMP + diphosphate.. In terms of biological role, DNA ligase that seals nicks in double-stranded DNA during DNA replication, DNA recombination and DNA repair. The sequence is that of DNA ligase 1 from Drosophila melanogaster (Fruit fly).